The following is a 738-amino-acid chain: Platelet endothelial cell adhesion molecule (738 aa).

Residues 1-27 (MQPRWAQGATMWLGVLLTLLLCSSLEG) form the signal peptide. The Extracellular portion of the chain corresponds to 28-601 (QENSFTINSV…VRVILAPWKK (574 aa)). Ig-like C2-type domains are found at residues 35–121 (NSVD…KTTA), 145–233 (GGIV…TESF), and 236–315 (PKFH…SKVS). Residues asparagine 52, asparagine 84, and asparagine 151 are each glycosylated (N-linked (GlcNAc...) asparagine). Cysteine 57 and cysteine 109 are disulfide-bonded. 2 disulfides stabilise this stretch: cysteine 152–cysteine 206 and cysteine 256–cysteine 304. Asparagine 301, asparagine 320, asparagine 344, asparagine 356, asparagine 453, and asparagine 551 each carry an N-linked (GlcNAc...) asparagine glycan. Ig-like C2-type domains are found at residues 328 to 401 (PELE…NTVQ), 424 to 493 (GQTI…EVLR), and 499 to 591 (PVDE…KILT). 3 disulfide bridges follow: cysteine 347-cysteine 386, cysteine 431-cysteine 476, and cysteine 523-cysteine 572. A helical transmembrane segment spans residues 602–620 (GLIAVVIIGVIIALLIIAA). Topologically, residues 621-738 (KCYFLRKAKA…SRTEGSLDGT (118 aa)) are cytoplasmic. The S-palmitoyl cysteine moiety is linked to residue cysteine 622. Residues 658–715 (EANSHYGHNDDVRNHAMKPINDNKEPLNSDVQYTEVQVSSAESHKDLGKKDTETVYSE) are disordered. Positions 686-698 (SDVQYTEVQVSSA) are enriched in polar residues. 2 consecutive short sequence motifs (ITIM motif) follow at residues 688–693 (VQYTEV) and 711–716 (TVYSEV). A phosphotyrosine; by FER mark is found at tyrosine 690 and tyrosine 713. Positions 699–715 (ESHKDLGKKDTETVYSE) are enriched in basic and acidic residues. Residues 709–729 (TETVYSEVRKAVPDAVESRYS) are membrane-bound segment which detaches upon phosphorylation. Residues 721-738 (PDAVESRYSRTEGSLDGT) are may play a role in cytoprotective signaling. Phosphoserine is present on residues serine 729 and serine 734.

As to quaternary structure, trans-homodimer (via Ig-like C2-type 1 and Ig-like C2-type 2 domains); trans-homodimerization is required for cell-cell interaction. Forms a complex with BDKRB2 and GNAQ. Interacts with BDKRB2 and GNAQ. Interacts with PTPN11; Tyr-713 is critical for PTPN11 recruitment. Interacts with FER. Interacts (via Ig-like C2-type domain 6) with CD177; the interaction is Ca(2+)-dependent; the interaction is direct. In terms of processing, phosphorylated on Ser and Tyr residues after cellular activation by src kinases. Upon activation, phosphorylated on Ser-729 which probably initiates the dissociation of the membrane-interaction segment (residues 709-729) from the cell membrane allowing the sequential phosphorylation of Tyr-713 and Tyr-690. Constitutively phosphorylated on Ser-734 in resting platelets. Phosphorylated on tyrosine residues by FER and FES in response to FCER1 activation. In endothelial cells Fyn mediates mechanical-force (stretch or pull) induced tyrosine phosphorylation. Post-translationally, palmitoylation by ZDHHC21 is necessary for cell surface expression in endothelial cells and enrichment in membrane rafts. In terms of tissue distribution, expressed on platelets and leukocytes and is primarily concentrated at the borders between endothelial cells. Expressed in human umbilical vein endothelial cells (HUVECs) (at protein level). Expressed on neutrophils (at protein level). Isoform Long predominates in all tissues examined. Isoform Delta12 is detected only in trachea. Isoform Delta14-15 is only detected in lung. Isoform Delta14 is detected in all tissues examined with the strongest expression in heart. Isoform Delta15 is expressed in brain, testis, ovary, cell surface of platelets, human umbilical vein endothelial cells (HUVECs), Jurkat T-cell leukemia, human erythroleukemia (HEL) and U-937 histiocytic lymphoma cell lines (at protein level).

The protein localises to the cell membrane. It is found in the membrane raft. Its subcellular location is the cell junction. Cell adhesion molecule which is required for leukocyte transendothelial migration (TEM) under most inflammatory conditions. Tyr-690 plays a critical role in TEM and is required for efficient trafficking of PECAM1 to and from the lateral border recycling compartment (LBRC) and is also essential for the LBRC membrane to be targeted around migrating leukocytes. Trans-homophilic interaction may play a role in endothelial cell-cell adhesion via cell junctions. Heterophilic interaction with CD177 plays a role in transendothelial migration of neutrophils. Homophilic ligation of PECAM1 prevents macrophage-mediated phagocytosis of neighboring viable leukocytes by transmitting a detachment signal. Promotes macrophage-mediated phagocytosis of apoptotic leukocytes by tethering them to the phagocytic cells; PECAM1-mediated detachment signal appears to be disabled in apoptotic leukocytes. Modulates bradykinin receptor BDKRB2 activation. Regulates bradykinin- and hyperosmotic shock-induced ERK1/2 activation in endothelial cells. Induces susceptibility to atherosclerosis. Functionally, does not protect against apoptosis. This Homo sapiens (Human) protein is Platelet endothelial cell adhesion molecule (PECAM1).